A 601-amino-acid chain; its full sequence is Mitochondrial tRNA methylthiotransferase CDK5RAP1 (601 aa).

A mitochondrion-targeting transit peptide spans 1-33 (MHPLQCVLQVQRSLGWGPLASVSWLSLRMCRAH). Positions 100–220 (RKVYLETYGC…LPRLLAVAES (121 aa)) constitute an MTTase N-terminal domain. Residues Cys-109, Cys-145, Cys-183, Cys-258, Cys-262, and Cys-265 each coordinate [4Fe-4S] cluster. The Radical SAM core domain maps to 244 to 512 (SASATSAFVS…ITIFREEATK (269 aa)). The TRAM domain maps to 515-590 (QTSVGCTQLV…SQTLRGHVLC (76 aa)).

The protein belongs to the methylthiotransferase family. MiaB subfamily. Interacts with CDK5R1 (p35 form). CDK5RAP1, CDK5RAP2 and CDK5RAP3 show competitive binding to CDK5R1. Forms a complex with CDK5R1 and CDK5. The cofactor is [4Fe-4S] cluster. Expressed in heart, brain, placenta, lung, liver, skeletal muscle, kidney and pancreas. Expressed in neurons of central nervous tissue. In terms of tissue distribution, mainly expressed in brain, placenta and testis. As to expression, high expression in placenta and lung.

It is found in the mitochondrion. The enzyme catalyses N(6)-dimethylallyladenosine(37) in tRNA + (sulfur carrier)-SH + AH2 + 2 S-adenosyl-L-methionine = 2-methylsulfanyl-N(6)-dimethylallyladenosine(37) in tRNA + (sulfur carrier)-H + 5'-deoxyadenosine + L-methionine + A + S-adenosyl-L-homocysteine + 2 H(+). In terms of biological role, methylthiotransferase that catalyzes the conversion of N6-(dimethylallyl)adenosine (i(6)A) to 2-methylthio-N6-(dimethylallyl)adenosine (ms(2)i(6)A) at position 37 (adjacent to the 3'-end of the anticodon) of four mitochondrial DNA-encoded tRNAs (Ser(UCN), Phe, Tyr and Trp). Essential for efficient and highly accurate protein translation by the ribosome. Specifically inhibits CDK5 activation by CDK5R1. Essential for efficient mitochondrial protein synthesis and respiratory chain; shows pathological consequences in mitochondrial disease. In Homo sapiens (Human), this protein is Mitochondrial tRNA methylthiotransferase CDK5RAP1.